Here is a 152-residue protein sequence, read N- to C-terminus: Large-conductance mechanosensitive channel (152 aa).

3 helical membrane passes run 21 to 41, 44 to 64, and 92 to 112; these read IDLA…DSLV, VVMP…NKFL, and GNFI…FWMV.

This sequence belongs to the MscL family. In terms of assembly, homopentamer.

It is found in the cell inner membrane. Channel that opens in response to stretch forces in the membrane lipid bilayer. May participate in the regulation of osmotic pressure changes within the cell. This is Large-conductance mechanosensitive channel from Bordetella bronchiseptica (strain ATCC BAA-588 / NCTC 13252 / RB50) (Alcaligenes bronchisepticus).